The following is a 119-amino-acid chain: Large ribosomal subunit protein bL20 (119 aa).

The protein belongs to the bacterial ribosomal protein bL20 family.

Functionally, binds directly to 23S ribosomal RNA and is necessary for the in vitro assembly process of the 50S ribosomal subunit. It is not involved in the protein synthesizing functions of that subunit. The polypeptide is Large ribosomal subunit protein bL20 (Bradyrhizobium diazoefficiens (strain JCM 10833 / BCRC 13528 / IAM 13628 / NBRC 14792 / USDA 110)).